The primary structure comprises 128 residues: Glycine cleavage system H protein (128 aa).

One can recognise a Lipoyl-binding domain in the interval 25-107 (IITVGITHHA…YGAGWFFKLK (83 aa)). Residue lysine 66 is modified to N6-lipoyllysine.

This sequence belongs to the GcvH family. As to quaternary structure, the glycine cleavage system is composed of four proteins: P, T, L and H. It depends on (R)-lipoate as a cofactor.

In terms of biological role, the glycine cleavage system catalyzes the degradation of glycine. The H protein shuttles the methylamine group of glycine from the P protein to the T protein. This is Glycine cleavage system H protein from Neisseria meningitidis serogroup A / serotype 4A (strain DSM 15465 / Z2491).